The following is a 44-amino-acid chain: uncharacterized protein (44 aa).

This is an uncharacterized protein from Vaccinia virus (strain Western Reserve) (VACV).